Consider the following 279-residue polypeptide: NADPH-dependent 7-cyano-7-deazaguanine reductase (279 aa).

86–88 (IES) lines the substrate pocket. Position 88–89 (88–89 (SK)) interacts with NADPH. Cys187 (thioimide intermediate) is an active-site residue. The active-site Proton donor is Asp194. 226-227 (HE) serves as a coordination point for substrate. 255–256 (RG) contributes to the NADPH binding site.

This sequence belongs to the GTP cyclohydrolase I family. QueF type 2 subfamily. In terms of assembly, homodimer.

It is found in the cytoplasm. It catalyses the reaction 7-aminomethyl-7-carbaguanine + 2 NADP(+) = 7-cyano-7-deazaguanine + 2 NADPH + 3 H(+). The protein operates within tRNA modification; tRNA-queuosine biosynthesis. Catalyzes the NADPH-dependent reduction of 7-cyano-7-deazaguanine (preQ0) to 7-aminomethyl-7-deazaguanine (preQ1). The sequence is that of NADPH-dependent 7-cyano-7-deazaguanine reductase from Haemophilus influenzae (strain PittGG).